Consider the following 369-residue polypeptide: Peptide chain release factor 2 (369 aa).

Gln250 is subject to N5-methylglutamine.

The protein belongs to the prokaryotic/mitochondrial release factor family. Methylated by PrmC. Methylation increases the termination efficiency of RF2.

It localises to the cytoplasm. Peptide chain release factor 2 directs the termination of translation in response to the peptide chain termination codons UGA and UAA. The sequence is that of Peptide chain release factor 2 (prfB) from Rickettsia prowazekii (strain Madrid E).